The following is a 214-amino-acid chain: Ribosomal RNA small subunit methyltransferase G (214 aa).

Residues Gly-77, Leu-82, 128 to 129, and Arg-143 each bind S-adenosyl-L-methionine; that span reads VE.

It belongs to the methyltransferase superfamily. RNA methyltransferase RsmG family.

The protein resides in the cytoplasm. It catalyses the reaction guanosine(527) in 16S rRNA + S-adenosyl-L-methionine = N(7)-methylguanosine(527) in 16S rRNA + S-adenosyl-L-homocysteine. Its function is as follows. Specifically methylates the N7 position of guanine in position 527 of 16S rRNA. The polypeptide is Ribosomal RNA small subunit methyltransferase G (Nitrosococcus oceani (strain ATCC 19707 / BCRC 17464 / JCM 30415 / NCIMB 11848 / C-107)).